The primary structure comprises 2045 residues: Host cell factor 1 (2045 aa).

A2 is subject to N-acetylalanine. At S6 the chain carries Phosphoserine. Kelch repeat units follow at residues 44 to 89 (LIVV…GFVC), 93 to 140 (RLLV…RLGH), 148 to 194 (KCYL…ITYG), 217 to 265 (KLVI…TIGN), and 266 to 313 (KMYV…LMDT). Glycyl lysine isopeptide (Lys-Gly) (interchain with G-Cter in ubiquitin) cross-links involve residues K105, K163, and K244. Residue K282 forms a Glycyl lysine isopeptide (Lys-Gly) (interchain with G-Cter in SUMO2) linkage. At K288 the chain carries N6-acetyllysine. K363 is covalently cross-linked (Glycyl lysine isopeptide (Lys-Gly) (interchain with G-Cter in ubiquitin)). One can recognise a Fibronectin type-III 1 domain in the interval 366 to 457 (PPARVQLVRA…VPQAATAPPS (92 aa)). A disordered region spans residues 407-434 (ATATSPTPNPVPSVPANPPKSPAPAAAA). S411 is subject to Phosphoserine. The span at 413 to 428 (TPNPVPSVPANPPKSP) shows a compositional bias: pro residues. The tract at residues 500-550 (LVTMRPASQAGKAPVTVTSLPASVRMVVPTQSAQGTVIGSNPQMSGMAALA) is required for interaction with OGT. Omega-N-methylarginine occurs at positions 504 and 524. Phosphoserine occurs at positions 598, 666, and 669. Residues 610–722 (LKTAAAQVGT…KGPLPAGTIL (113 aa)) are interaction with SIN3A. An interaction with ZBTB17 region spans residues 750–902 (ILGISSVSPS…SLAGAGAHST (153 aa)). Position 813 is an N6-acetyllysine (K813). Residues 813–912 (KIITAVPKIA…SASLATPITT (100 aa)) form an interaction with GABP2 region. HCF repeat repeat units lie at residues 1010 to 1035 (TLVC…TVVA), 1072 to 1097 (VRVC…ATSN), and 1101 to 1126 (QHGC…AMSS). An HCF repeat 4; degenerate repeat occupies 1157–1182 (VQGTVKPQCQTQQTNMTTTTMTVQAT). At S1204 the chain carries Phosphoserine. R1216 is subject to Asymmetric dimethylarginine. Disordered regions lie at residues 1219–1242 (LSGP…YTTN), 1302–1375 (PCET…TSTG), 1444–1475 (TVTS…STNI), and 1494–1525 (TTVT…QLPP). S1223 is modified (phosphoserine). HCF repeat repeat units follow at residues 1295 to 1320 (TQVC…SNAG) and 1323 to 1348 (QRVC…ATSN). Positions 1308–1321 (TGTTNTATTSNAGS) are enriched in low complexity. The HCF repeat 7; degenerate repeat unit spans residues 1358-1383 (QQPASGHPCETHQTTSTGTTMSVSVG). An HCF repeat 8 repeat occupies 1423-1448 (QRVCSNPPCETHETGTTHTATTVTSN). At T1500 the chain carries Phosphothreonine. Residues 1502–1511 (VPGPSVPPPE) are compositionally biased toward pro residues. Phosphoserine occurs at positions 1506, 1516, and 1781. Fibronectin type-III domains lie at 1808–1898 (PPPP…TCLP) and 1900–2016 (FPGA…TSKD). Residues K1817 and K1818 each participate in a glycyl lysine isopeptide (Lys-Gly) (interchain with G-Cter in ubiquitin) cross-link. S1848 is modified (phosphoserine). The tract at residues 2004–2045 (ATQVRWLQETSKDSSGTKPASKRPMSSPEMKSAPKKSKADGQ) is disordered. K2015 carries the post-translational modification N6-acetyllysine. Residue K2034 forms a Glycyl lysine isopeptide (Lys-Gly) (interchain with G-Cter in SUMO2) linkage.

In terms of assembly, composed predominantly of six polypeptides ranging from 110 to 150 kDa and a minor 300 kDa polypeptide. The majority of N- and C-terminal cleavage products remain tightly, albeit non-covalently, associated. Interacts with POU2F1, CREB3, ZBTB17, EGR2, E2F4, CREBZF, SP1, GABP2, Sin3 HDAC complex (SIN3A, HDAC1, HDAC2, SUDS3), SAP30, SIN3B and FHL2. Component of a MLL1 complex, composed of at least the core components KMT2A/MLL1, ASH2L, HCFC1, WDR5 and RBBP5, as well as the facultative components BACC1, CHD8, DPY30, E2F6, HCFC2, HSP70, INO80C, KANSL1, LAS1L, MAX, MCRS1, MEN1, MGA, KAT8, PELP1, PHF20, PRP31, RING2, RUVBL1, RUVBL2, SENP3, TAF1, TAF4, TAF6, TAF7, TAF9 and TEX10. Component of a THAP1/THAP3-HCFC1-OGT complex that is required for the regulation of the transcriptional activity of RRM1. Interacts directly with THAP3 (via its HBM). Interacts (via the Kelch-repeat domain) with THAP1 (via the HBM); the interaction recruits HCHC1 to the RRM1. Interacts with THAP7 and THAP11 (via the HMB). Interacts directly with OGT; the interaction, which requires the HCFC1 cleavage site domain, glycosylates and promotes the proteolytic processing of HCFC1 and retains OGT in the nucleus. Component of the SET1 complex, at least composed of the catalytic subunit (SETD1A or SETD1B), WDR5, WDR82, RBBP5, ASH2L, CXXC1, HCFC1 and DPY30. Component of the NSL complex at least composed of MOF/KAT8, KANSL1, KANSL2, KANSL3, MCRS1, PHF20, OGT1/OGT, WDR5 and HCFC1. Component of a complex at least composed of ZNF335, HCFC1, CCAR2, EMSY, MKI67, RBBP5, ASH2L and WDR5; the complex is formed as a result of interactions between components of a nuclear receptor-mediated transcription complex and a histone methylation complex. Within the complex interacts with ZNF335. Interacts with TET2 and TET3. Interacts with HCFC1R1. Interacts with THAP11. Interacts (via Kelch domain) with KMT2E (via HBM motif). Interacts with E2F1. Accessory scaffold component of the polycomb repressive deubiquitinase (PR-DUB) complex, at least composed of BAP1, one of ASXL1, ASXL2 or (probably) ASXL3 and one of MBD5 or MBD6; the PR-DUB core associates with a number of accessory proteins, including FOXK1, FOXK2, KDM1B, HCFC1, YY1 and OGT. Interacts with YY1 (via Gly-rich region); the interaction is direct. Interacts with BAP1 (via HBM-like motif). Post-translationally, proteolytically cleaved at one or several PPCE--THET sites within the HCF repeats. Further cleavage of the primary N- and C-terminal chains results in a 'trimming' and accumulation of the smaller chains. Cleavage is promoted by O-glycosylation. In terms of processing, O-glycosylated. GlcNAcylation by OGT promotes proteolytic processing. Ubiquitinated. Lys-1817 and Lys-1818 are ubiquitinated both via 'Lys-48'- and 'Lys-63'-linked polyubiquitin chains. BAP1 mediated deubiquitination of 'Lys-48'-linked polyubiquitin chains; deubiquitination by BAP1 does not seem to stabilize the protein. Expressed in liver, pituitary gland, skeletal muscle, kidney, eye and brain (at protein level). Also observed at low level in heart, spleen and lung.

The protein localises to the nucleus. It is found in the cytoplasm. Its function is as follows. Transcriptional coregulator. Serves as a scaffold protein, bridging interactions between transcription factors, including THAP11 and ZNF143, and transcriptional coregulators. Involved in control of the cell cycle. Also antagonizes transactivation by ZBTB17 and GABP2; represses ZBTB17 activation of the p15(INK4b) promoter and inhibits its ability to recruit p300. Coactivator for EGR2 and GABP2. Tethers the chromatin modifying Set1/Ash2 histone H3 'Lys-4' methyltransferase (H3K4me) and Sin3 histone deacetylase (HDAC) complexes (involved in the activation and repression of transcription respectively) together. As part of the NSL complex it may be involved in acetylation of nucleosomal histone H4 on several lysine residues. Recruits KMT2E to E2F1 responsive promoters promoting transcriptional activation and thereby facilitates G1 to S phase transition. Modulates expression of homeobox protein PDX1, perhaps acting in concert with transcription factor E2F1, thereby regulating pancreatic beta-cell growth and glucose-stimulated insulin secretion. May negatively modulate transcriptional activity of FOXO3. The sequence is that of Host cell factor 1 from Mus musculus (Mouse).